The chain runs to 580 residues: MAPSDTPPSAEDLPSQGELALFAPPATAEDALVPASMVNAWIYCPRLAVLEWGRGEKARSVDLIAGLRAHQATESGPTPALPDPMVLREDQSLKTRRLSLSSERLGLTAELDLLDVEEGMVIPVEIKVGKRPSVDEGAYLPERAQVCAQALLLREAGYTCLEGALWFAESRERVTVDLTEALVTATLVATSDLRLTVASGRLPPPLDHSAKCPRCSLLPICLPDEIAWFRKGSIARTPPPPASPALPLYGQTPGARIGKKDYTLVIQVEGEADRSLALDEISEVVLAGPVSLTTPAIHELLRREIPVAWMSSGFWFLGSTGGQGPRSAAVRTAQYALAGDERRRQAFARDLVSAKIRNGRTLLRRNWRGAEAERQIALDRLARLAERATTAETTACLLGIEGEAAAVYFRAFPQLFTQAVTTLPAFAFERRNRRPPADPVNACLSLCYAVLTRTLSSALSIAGLDPWKGFYHTERPGRPALALDLIESFRPVLADSTVLMVLNNGEIGTNDFLYAGGGCALKPNARRGLIAAYERRLDQETTHPVFGYQLSMRRLIQVQARLLARFVSGDIPRYPHYCPR.

The interval 1 to 223 (MAPSDTPPSA…RCSLLPICLP (223 aa)) is CRISPR-associated exonuclease Cas4. Cys-44 serves as a coordination point for [4Fe-4S] cluster. Asp-112 and Glu-125 together coordinate Mn(2+). Residues Cys-212, Cys-215, and Cys-221 each contribute to the [4Fe-4S] cluster site. The interval 248-580 (LYGQTPGARI…IPRYPHYCPR (333 aa)) is CRISPR-associated endonuclease Cas1. Mn(2+) contacts are provided by Glu-401, His-472, and Glu-487.

This sequence in the N-terminal section; belongs to the CRISPR-associated exonuclease Cas4 family. It in the C-terminal section; belongs to the CRISPR-associated endonuclease Cas1 family. As to quaternary structure, homodimer, forms a heterotetramer with a Cas2 homodimer. The cofactor is [4Fe-4S] cluster. Mg(2+) serves as cofactor. Requires Mn(2+) as cofactor.

The catalysed reaction is exonucleolytic cleavage in the 5'- to 3'-direction to yield nucleoside 3'-phosphates.. In terms of biological role, CRISPR (clustered regularly interspaced short palindromic repeat), is an adaptive immune system that provides protection against mobile genetic elements (viruses, transposable elements and conjugative plasmids). CRISPR clusters contain spacers, sequences complementary to antecedent mobile elements, and target invading nucleic acids. CRISPR clusters are transcribed and processed into CRISPR RNA (crRNA). The Cas4 region acts as a ssDNA exonuclease, while the Cas1 region acts as a dsDNA endonuclease. Involved in the integration of spacer DNA into the CRISPR cassette. This Rhodospirillum rubrum (strain ATCC 11170 / ATH 1.1.1 / DSM 467 / LMG 4362 / NCIMB 8255 / S1) protein is CRISPR-associated exonuclease Cas4/endonuclease Cas1 fusion (cas4-cas1).